The chain runs to 342 residues: Ferredoxin--NADP reductase (342 aa).

FAD-binding residues include C17, D36, Q44, Y49, V89, F124, D289, and T330.

The protein belongs to the ferredoxin--NADP reductase type 2 family. As to quaternary structure, homodimer. FAD is required as a cofactor.

It carries out the reaction 2 reduced [2Fe-2S]-[ferredoxin] + NADP(+) + H(+) = 2 oxidized [2Fe-2S]-[ferredoxin] + NADPH. In Nitrobacter winogradskyi (strain ATCC 25391 / DSM 10237 / CIP 104748 / NCIMB 11846 / Nb-255), this protein is Ferredoxin--NADP reductase.